Here is a 199-residue protein sequence, read N- to C-terminus: Probable NADH dehydrogenase [ubiquinone] iron-sulfur protein 7, mitochondrial (199 aa).

The N-terminal 16 residues, 1–16 (MLSALRTAGALSTRRL), are a transit peptide targeting the mitochondrion. The [4Fe-4S] cluster site is built by cysteine 74, cysteine 75, cysteine 139, and cysteine 169.

It belongs to the complex I 20 kDa subunit family. Complex I is composed of 45 different subunits This is a component of the iron-sulfur (IP) fragment of the enzyme. Requires [4Fe-4S] cluster as cofactor.

It is found in the mitochondrion. The enzyme catalyses a ubiquinone + NADH + 5 H(+)(in) = a ubiquinol + NAD(+) + 4 H(+)(out). In terms of biological role, core subunit of the mitochondrial membrane respiratory chain NADH dehydrogenase (Complex I) that is believed to belong to the minimal assembly required for catalysis. Complex I functions in the transfer of electrons from NADH to the respiratory chain. The immediate electron acceptor for the enzyme is believed to be ubiquinone. This Caenorhabditis briggsae protein is Probable NADH dehydrogenase [ubiquinone] iron-sulfur protein 7, mitochondrial.